Reading from the N-terminus, the 181-residue chain is MKQLLDFLPLVIFFAVYKFFDIYIASGALIAATALQLIVTYALYKKLEKMHLITFAMVTVFGTLTLVFHDDAFIKWKVTIIYALFALALGISQLLNKSILKSMLGKEMQVADKIWAHITWYWVIFFATCGLVNIYVAFSLPLETWVNFKVFGLTALTLVNTVITVFYLYKHLPEDQRKELK.

5 consecutive transmembrane segments (helical) span residues 10–30, 50–70, 72–92, 118–138, and 148–168; these read LVIF…GALI, MHLI…VFHD, AFIK…LGIS, ITWY…YVAF, and FKVF…VFYL.

This sequence belongs to the YciB family.

The protein resides in the cell inner membrane. Plays a role in cell envelope biogenesis, maintenance of cell envelope integrity and membrane homeostasis. The protein is Inner membrane-spanning protein YciB of Shewanella putrefaciens (strain CN-32 / ATCC BAA-453).